Reading from the N-terminus, the 421-residue chain is Gamma-glutamyl phosphate reductase (421 aa).

This sequence belongs to the gamma-glutamyl phosphate reductase family.

Its subcellular location is the cytoplasm. It catalyses the reaction L-glutamate 5-semialdehyde + phosphate + NADP(+) = L-glutamyl 5-phosphate + NADPH + H(+). It participates in amino-acid biosynthesis; L-proline biosynthesis; L-glutamate 5-semialdehyde from L-glutamate: step 2/2. Functionally, catalyzes the NADPH-dependent reduction of L-glutamate 5-phosphate into L-glutamate 5-semialdehyde and phosphate. The product spontaneously undergoes cyclization to form 1-pyrroline-5-carboxylate. This is Gamma-glutamyl phosphate reductase from Erythrobacter litoralis (strain HTCC2594).